The sequence spans 314 residues: MKQDLFILAGPTAVGKTDISIKLAQKLNGEIISADSMQIYKHMDIGSAKITEAEKEGIPHHLIDFVSPFDEFSVAEFKEKSKNAIKDIASRGKLPMIVGGTGFYIDSLIFNYDFANTYKDEEYREHLKNLASEHGKEYVHELLKDIDEVSYKKLYPNDLKRVIRALEVFKLTGKTISEFNKEQDIFDIPYNVYYFVLNMDRSKLYERINKRVDIMMEKGLIEEVKSLQNMGCTPDMQSMKGIGYKEILYYLDGKLSLDEAVELIKKGSRHYAKRQLTWFRKDNRVNWIDKDQYKDDTEVCNAIEEKFLNLKNNL.

10 to 17 (GPTAVGKT) is a binding site for ATP. Residue 12-17 (TAVGKT) participates in substrate binding. An interaction with substrate tRNA region spans residues 35-38 (DSMQ).

This sequence belongs to the IPP transferase family. In terms of assembly, monomer. It depends on Mg(2+) as a cofactor.

It catalyses the reaction adenosine(37) in tRNA + dimethylallyl diphosphate = N(6)-dimethylallyladenosine(37) in tRNA + diphosphate. Its function is as follows. Catalyzes the transfer of a dimethylallyl group onto the adenine at position 37 in tRNAs that read codons beginning with uridine, leading to the formation of N6-(dimethylallyl)adenosine (i(6)A). The sequence is that of tRNA dimethylallyltransferase from Clostridium novyi (strain NT).